A 199-amino-acid chain; its full sequence is Probable nicotinate-nucleotide adenylyltransferase (199 aa).

This sequence belongs to the NadD family.

The catalysed reaction is nicotinate beta-D-ribonucleotide + ATP + H(+) = deamido-NAD(+) + diphosphate. It functions in the pathway cofactor biosynthesis; NAD(+) biosynthesis; deamido-NAD(+) from nicotinate D-ribonucleotide: step 1/1. In terms of biological role, catalyzes the reversible adenylation of nicotinate mononucleotide (NaMN) to nicotinic acid adenine dinucleotide (NaAD). The protein is Probable nicotinate-nucleotide adenylyltransferase of Chloroherpeton thalassium (strain ATCC 35110 / GB-78).